A 103-amino-acid chain; its full sequence is Small ribosomal subunit protein uS10 (103 aa).

The protein belongs to the universal ribosomal protein uS10 family. As to quaternary structure, part of the 30S ribosomal subunit.

Its function is as follows. Involved in the binding of tRNA to the ribosomes. This chain is Small ribosomal subunit protein uS10, found in Shewanella pealeana (strain ATCC 700345 / ANG-SQ1).